A 441-amino-acid polypeptide reads, in one-letter code: Chromatin structure-remodeling complex subunit SFH1 (441 aa).

Residues 124–137 (DFDANDFEDDDDDD) are compositionally biased toward acidic residues. Disordered stretches follow at residues 124–183 (DFDA…AAPP) and 383–407 (EMTPEEMQKREMERDRSSRRLKRES). 2 stretches are compositionally biased toward basic and acidic residues: residues 138 to 147 (QSQRESRDGS) and 155 to 166 (DGTKKEEQDKFA).

The protein belongs to the SNF5 family.

It localises to the nucleus. Functionally, part of the chromatin structure-remodeling complex (RSC) which is involved in transcription regulation and nucleosome positioning. RSC is responsible for the transfer of a histone octamer from a nucleosome core particle to naked DNA. The reaction requires ATP and involves an activated RSC-nucleosome intermediate. Remodeling reaction also involves DNA translocation, DNA twist and conformational change. As a reconfigurer of centromeric and flanking nucleosomes, RSC complex is required both for proper kinetochore function in chromosome segregation and, via a PKC1-dependent signaling pathway, for organization of the cellular cytoskeleton. This subunit is essential for mitotic growth and required for cell cycle progression. The chain is Chromatin structure-remodeling complex subunit SFH1 (SFH1) from Yarrowia lipolytica (strain CLIB 122 / E 150) (Yeast).